The following is a 153-amino-acid chain: Putative trans-acting regulator pXO2-62/BXB0076/GBAA_pXO2_0076 (153 aa).

Belongs to the AtxA/AcpA family.

The sequence is that of Putative trans-acting regulator pXO2-62/BXB0076/GBAA_pXO2_0076 from Bacillus anthracis.